The following is a 128-amino-acid chain: SH2 domain-containing protein 1A (128 aa).

The SH2 domain maps to 6-102; it reads VYHGKISRET…GIVIPLQYPV (97 aa). The segment at 67–92 is interaction with FYN SH3 domain; that stretch reads ETAPGVHKRFFRKIKNLISAFQKPDQ. K89 carries the N6-acetyllysine modification. The disordered stretch occupies residues 104–128; the sequence is KKPSARSTQGATGRRDDPDVFLKTP. Basic and acidic residues predominate over residues 116-128; that stretch reads GRRDDPDVFLKTP.

Interacts with CD84, CD244, LY9, SLAMF1 and FYN. Interacts with NTRK1, NTRK2 and NTRK3.

It is found in the cytoplasm. Functionally, cytoplasmic adapter regulating receptors of the signaling lymphocytic activation molecule (SLAM) family such as SLAMF1, CD244, LY9, CD84, SLAMF6 and SLAMF7. In SLAM signaling seems to cooperate with SH2D1B/EAT-2. Initially it has been proposed that association with SLAMF1 prevents SLAMF1 binding to inhibitory effectors including INPP5D/SHIP1 and PTPN11/SHP-2. However, by simultaneous interactions, recruits FYN which subsequently phosphorylates and activates SLAMF1. Positively regulates CD244/2B4- and CD84-mediated natural killer (NK) cell functions. Can also promote CD48-, SLAMF6 -, LY9-, and SLAMF7-mediated NK cell activation. In the context of NK cell-mediated cytotoxicity enhances conjugate formation with target cells. May also regulate the activity of the neurotrophin receptors NTRK1, NTRK2 and NTRK3. The protein is SH2 domain-containing protein 1A (SH2D1A) of Bos taurus (Bovine).